A 333-amino-acid polypeptide reads, in one-letter code: MSAATKLHKTSWCALRQLQQYRTKANFSGSSASLAKRNDLFNQEQRRQRDAVGRIDKIEVRYLGLPEDVTLVMNGNISTPFNCAQHLSEGHCKRSALALIDGSVPWDMHRPLQESCTLQLLNFHVSEPHVVNKAFWRTCSFMLGAALNRAFKPEANLQLHSFPGPNIKSGSFVHDIVLQTQNWEPGKEEMRALSAEMVKLAAQDLRIERLDVQQDLAQEMFKDSKYKSEQLPSISQQTNGRVTLYRLGDHIDISRGPMVASTSFLGKCVISAAHKVAEEGPSGAFYRIQGVALPSGFQLNHVAFGVLEERSKKPSPARLPNEPFEEQQQLQLS.

In terms of domain architecture, TGS spans 56–122; the sequence is DKIEVRYLGL…QESCTLQLLN (67 aa). The interval 311–333 is disordered; the sequence is SKKPSPARLPNEPFEEQQQLQLS.

Belongs to the mitochondrion-specific ribosomal protein mL39 family. As to quaternary structure, component of the mitochondrial ribosome large subunit (39S) which comprises a 16S rRNA and about 50 distinct proteins.

The protein localises to the mitochondrion. The chain is Large ribosomal subunit protein mL39 (mRpL39) from Drosophila melanogaster (Fruit fly).